The sequence spans 420 residues: MDTPARLNDLQRTTLAIVLAGGRGTRLGPLTNKRVKPAVHFGGKYRIIDFALSNCLNSGIRRIAVVTQYKAHSLLRHLQRGWSFLRGEMGEFIDLWPAQQRVEGAHWYRGTADAVFQNLDIIRSIRPKYVVVLAGDHIYKMDYTRMIADHAESGADCTVGCIEVPRMEAVAFGVMHVDANRRVTDFLEKPADPPCIPGRPDTALASMGIYVFSADYLYSLLEENISTIDTDHDFGKDILPRVVTQGTAIAHPFSMSCVSSDPNVEPYWRDVGTIDAYWAANLDLASTIPTLDLYDRNWPIWTYQEQLPPAKFVRDMKGLQGSGNNLIVCGGCVISGSQISRSVLSSNVKVSSFCNINEAVLLPQVTVGASCRLQKVVIDRGCAIPEGTVIGEDPVSDAERFYRTDDGVVLVTPEALRQKV.

Alpha-D-glucose 1-phosphate-binding positions include Y108, G173, 188–189, and S206; that span reads EK.

This sequence belongs to the bacterial/plant glucose-1-phosphate adenylyltransferase family. Homotetramer.

The catalysed reaction is alpha-D-glucose 1-phosphate + ATP + H(+) = ADP-alpha-D-glucose + diphosphate. The protein operates within glycan biosynthesis; glycogen biosynthesis. Functionally, involved in the biosynthesis of ADP-glucose, a building block required for the elongation reactions to produce glycogen. Catalyzes the reaction between ATP and alpha-D-glucose 1-phosphate (G1P) to produce pyrophosphate and ADP-Glc. In Paraburkholderia phytofirmans (strain DSM 17436 / LMG 22146 / PsJN) (Burkholderia phytofirmans), this protein is Glucose-1-phosphate adenylyltransferase.